The following is a 309-amino-acid chain: Aspartate carbamoyltransferase catalytic subunit (309 aa).

Arg-49 and Thr-50 together coordinate carbamoyl phosphate. Lys-77 is a binding site for L-aspartate. Residues Arg-99, His-127, and Gln-130 each coordinate carbamoyl phosphate. Arg-160 and Arg-211 together coordinate L-aspartate. Ala-252 and Pro-253 together coordinate carbamoyl phosphate.

The protein belongs to the aspartate/ornithine carbamoyltransferase superfamily. ATCase family. In terms of assembly, heterododecamer (2C3:3R2) of six catalytic PyrB chains organized as two trimers (C3), and six regulatory PyrI chains organized as three dimers (R2).

It catalyses the reaction carbamoyl phosphate + L-aspartate = N-carbamoyl-L-aspartate + phosphate + H(+). It functions in the pathway pyrimidine metabolism; UMP biosynthesis via de novo pathway; (S)-dihydroorotate from bicarbonate: step 2/3. In terms of biological role, catalyzes the condensation of carbamoyl phosphate and aspartate to form carbamoyl aspartate and inorganic phosphate, the committed step in the de novo pyrimidine nucleotide biosynthesis pathway. The polypeptide is Aspartate carbamoyltransferase catalytic subunit (Geobacillus sp. (strain WCH70)).